The chain runs to 325 residues: Tetraacyldisaccharide 4'-kinase (325 aa).

Position 58–65 (threonine 58–threonine 65) interacts with ATP.

Belongs to the LpxK family.

The catalysed reaction is a lipid A disaccharide + ATP = a lipid IVA + ADP + H(+). The protein operates within glycolipid biosynthesis; lipid IV(A) biosynthesis; lipid IV(A) from (3R)-3-hydroxytetradecanoyl-[acyl-carrier-protein] and UDP-N-acetyl-alpha-D-glucosamine: step 6/6. Its function is as follows. Transfers the gamma-phosphate of ATP to the 4'-position of a tetraacyldisaccharide 1-phosphate intermediate (termed DS-1-P) to form tetraacyldisaccharide 1,4'-bis-phosphate (lipid IVA). This is Tetraacyldisaccharide 4'-kinase from Coxiella burnetii (strain RSA 331 / Henzerling II).